The primary structure comprises 264 residues: MAQIHPTAIVDPAAELADSVVVGAYAVIGPQVRIGAGTTIGPHCVIEGRTTIGVDNRFFQFSSIGALPQDMSHDGEITELVIGDRNTVREFCTFNTGTRKEDGVTRVGSDNWIMAYVHLAHDVRLGSHCVLANNATLAGHVHVGDWATIGGLSGVHQFVHIGAHAMIGFQGHVSQDVPPYMTVDGNPLTVRAVNLTGLRRRGFSNERIGVIRQMHKLLYRDSLTLEQAVEAVGALRGQQAEAQSDADIAVMLDFIAGAKRGLVR.

It belongs to the transferase hexapeptide repeat family. LpxA subfamily. Homotrimer.

It is found in the cytoplasm. The catalysed reaction is a (3R)-hydroxyacyl-[ACP] + UDP-N-acetyl-alpha-D-glucosamine = a UDP-3-O-[(3R)-3-hydroxyacyl]-N-acetyl-alpha-D-glucosamine + holo-[ACP]. It participates in glycolipid biosynthesis; lipid IV(A) biosynthesis; lipid IV(A) from (3R)-3-hydroxytetradecanoyl-[acyl-carrier-protein] and UDP-N-acetyl-alpha-D-glucosamine: step 1/6. Involved in the biosynthesis of lipid A, a phosphorylated glycolipid that anchors the lipopolysaccharide to the outer membrane of the cell. This Leptothrix cholodnii (strain ATCC 51168 / LMG 8142 / SP-6) (Leptothrix discophora (strain SP-6)) protein is Acyl-[acyl-carrier-protein]--UDP-N-acetylglucosamine O-acyltransferase.